The sequence spans 352 residues: MVPQELIEKIKLISPGTELRKALDDIINANFGALIFLVDDPKKYEDIIQGGFWLDTDFSAEKLYELSKMDGAIVLSEDITKIYYANVHLVPDPTIPTGETGTRHRTAERLAKQTGKVVIAVSRRRNIISLYYKNYKYVVNQVDFLISKVTQAISTLEKYKDNFNKLLSELEVLELENRVTLADVVRTLAKGFELLRIVEEIRPYIVELGEEGRLARMQLRELTEDVDDLLVLLVMDYSSEEVDEEAAQDIMQDFVKKRDPSPISISRALGYDVQQVAQLDDVLVSARGYRLLKTVARIPLSIGYNVVRMFKTLDQISKASVEDLKKVEGIGEKRARAISESISSLKHRKTSE.

Residues 3-143 (PQELIEKIKL…NYKYVVNQVD (141 aa)) form the DAC domain. ATP-binding positions include Gly71, Leu89, and 102–106 (TRHRT).

The protein belongs to the DisA family. As to quaternary structure, homooctamer. The cofactor is Mg(2+).

The catalysed reaction is 2 ATP = 3',3'-c-di-AMP + 2 diphosphate. Participates in a DNA-damage check-point. DisA forms globular foci that rapidly scan along the chromosomes searching for lesions. Its function is as follows. Also has diadenylate cyclase activity, catalyzing the condensation of 2 ATP molecules into cyclic di-AMP (c-di-AMP). c-di-AMP likely acts as a signaling molecule that may couple DNA integrity with a cellular process. The sequence is that of DNA integrity scanning protein DisA from Thermotoga petrophila (strain ATCC BAA-488 / DSM 13995 / JCM 10881 / RKU-1).